The following is a 201-amino-acid chain: FMN-dependent NADH:quinone oxidoreductase (201 aa).

92–95 lines the FMN pocket; it reads MWNL.

Belongs to the azoreductase type 1 family. In terms of assembly, homodimer. Requires FMN as cofactor.

It carries out the reaction 2 a quinone + NADH + H(+) = 2 a 1,4-benzosemiquinone + NAD(+). It catalyses the reaction N,N-dimethyl-1,4-phenylenediamine + anthranilate + 2 NAD(+) = 2-(4-dimethylaminophenyl)diazenylbenzoate + 2 NADH + 2 H(+). Functionally, quinone reductase that provides resistance to thiol-specific stress caused by electrophilic quinones. Also exhibits azoreductase activity. Catalyzes the reductive cleavage of the azo bond in aromatic azo compounds to the corresponding amines. This Caldicellulosiruptor bescii (strain ATCC BAA-1888 / DSM 6725 / KCTC 15123 / Z-1320) (Anaerocellum thermophilum) protein is FMN-dependent NADH:quinone oxidoreductase.